The primary structure comprises 738 residues: Alcohol dehydrogenase (quinone), dehydrogenase subunit (738 aa).

The first 35 residues, 1-35 (MISAVFGKRRSLSRTLTAGTICAALISGYATMASA), serve as a signal peptide directing secretion. Pyrroloquinoline quinone is bound at residue Glu97. A disulfide bridge links Cys143 with Cys144. Arg149 contributes to the pyrroloquinoline quinone binding site. Residue Glu217 participates in Ca(2+) binding. Residue Thr278 participates in pyrroloquinoline quinone binding. Residues Asn298 and Asp343 each coordinate Ca(2+). Asp343 functions as the Proton acceptor in the catalytic mechanism. 2 residues coordinate pyrroloquinoline quinone: Lys370 and Ile584. The Cytochrome c domain occupies 634-738 (FDSKRTDNGY…NADGIPEQLP (105 aa)). Heme c-binding residues include Cys650, Cys653, His654, and Met693.

Belongs to the bacterial PQQ dehydrogenase family. In terms of assembly, the alcohol dehydrogenase multicomponent enzyme system is composed of a dehydrogenase subunit I (AdhA) and a cytochrome c subunit II (AdhB). The cofactor is pyrroloquinoline quinone. Requires Ca(2+) as cofactor. It depends on heme c as a cofactor.

It localises to the cell membrane. The enzyme catalyses ethanol + a ubiquinone = a ubiquinol + acetaldehyde. Dehydrogenase component of the alcohol dehydrogenase multicomponent enzyme system which is involved in the production of acetic acid and in the ethanol oxidase respiratory chain. Quinohemoprotein alcohol dehydrogenase (ADH) catalyzes the oxidation of ethanol to acetaldehyde by transferring electrons to the ubiquinone embedded in the membrane phospholipids. The electrons transfer from ethanol to membranous ubiquinone occurs from pyrroloquinoline quinone (PQQ) to one heme c in subunit I (AdhA), and finally to two heme c in subunit II (AdhB). Besides ubiquinone reduction, ADH also has a ubiquinol (QH2) oxidation reaction which mediates electron transfer from ubiquinol to the non-energy generating bypass oxidase system. The electrons transfer occurs from ubiquinol (QH2) to the additional heme c within subunit II (AdhB). This is Alcohol dehydrogenase (quinone), dehydrogenase subunit (adhA) from Gluconacetobacter polyoxogenes (Acetobacter polyoxogenes).